The primary structure comprises 224 residues: Large ribosomal subunit protein uL1m (224 aa).

It belongs to the universal ribosomal protein uL1 family.

It localises to the mitochondrion. The polypeptide is Large ribosomal subunit protein uL1m (RPL1) (Reclinomonas americana).